The chain runs to 194 residues: Histone H1.0 (194 aa).

N-acetylmethionine is present on M1. The segment covering 1-11 (MTENSTSAPAA) has biased composition (low complexity). A disordered region spans residues 1–29 (MTENSTSAPAAKPKRAKASKKSTDHPKYS). Residue T2 is modified to N-acetylthreonine; in Histone H1.0, N-terminally processed. Positions 24–97 (DHPKYSDMVV…GASGSFRLAK (74 aa)) constitute an H15 domain. At R42 the chain carries Citrulline. The interval 84–194 (TKGVGASGSF…SSAKRAGKKK (111 aa)) is disordered. Residue S104 is modified to ADP-ribosylserine. A compositionally biased stretch (basic residues) spans 105 to 194 (VAFKKTKKEI…SSAKRAGKKK (90 aa)).

It belongs to the histone H1/H5 family. ADP-ribosylated on Ser-104 in response to DNA damage.

It localises to the nucleus. Its subcellular location is the chromosome. Histones H1 are necessary for the condensation of nucleosome chains into higher-order structures. The histones H1.0 are found in cells that are in terminal stages of differentiation or that have low rates of cell division. This chain is Histone H1.0 (H1-0), found in Pongo abelii (Sumatran orangutan).